The chain runs to 128 residues: Arsenic resistance transcriptional regulator ArsR1 (128 aa).

The 93-residue stretch at M11–N103 folds into the HTH arsR-type domain. Arsenite contacts are provided by C43 and C45. A DNA-binding region (H-T-H motif) is located at residues V44–E67.

As to quaternary structure, homodimer.

It is found in the cytoplasm. Its function is as follows. Binds arsenite and regulates the expression of arsenic efflux pumps. In vitro, also binds antimony and bismuth, but not arsenate. The sequence is that of Arsenic resistance transcriptional regulator ArsR1 from Pseudomonas putida (strain ATCC 47054 / DSM 6125 / CFBP 8728 / NCIMB 11950 / KT2440).